The sequence spans 256 residues: MAARLLFRRSSQILRSIQRNPQISSSFESPPCPIFHSLTTASPDPSRLSSLTFLRSLSIARRGPTRPKKIDIGAKARQMQNRRLWTYALTFSCIAGFVVIVLNQFQDQLVFYLTPSDAMEKFAENPTKNKFRLGGLVLEGSVAQPAASQEMEFVITDLITDILVRYKGSLPDLFREGHSVVVEGFIKPYTDEVRKEVSTKPISKKARNLDCFFSATEVLAKHDEKYMPQEVAAAIEKNKKIIEAAATEQAAEVAAS.

The N-terminal 57 residues, 1–57, are a transit peptide targeting the mitochondrion; sequence MAARLLFRRSSQILRSIQRNPQISSSFESPPCPIFHSLTTASPDPSRLSSLTFLRSL. Residues 84 to 106 form a helical membrane-spanning segment; that stretch reads LWTYALTFSCIAGFVVIVLNQFQ. The heme site is built by His222 and Tyr226.

It belongs to the CcmE/CycJ family.

It localises to the mitochondrion inner membrane. Its subcellular location is the mitochondrion intermembrane space. Heme-binding chaperone that may be involved in cytochrome c maturation in mitochondria. The protein is Cytochrome c-type biogenesis protein CcmE homolog, mitochondrial of Arabidopsis thaliana (Mouse-ear cress).